The following is a 427-amino-acid chain: Glutamate-1-semialdehyde 2,1-aminomutase (427 aa).

K265 bears the N6-(pyridoxal phosphate)lysine mark.

The protein belongs to the class-III pyridoxal-phosphate-dependent aminotransferase family. HemL subfamily. In terms of assembly, homodimer. It depends on pyridoxal 5'-phosphate as a cofactor.

It localises to the cytoplasm. The enzyme catalyses (S)-4-amino-5-oxopentanoate = 5-aminolevulinate. It functions in the pathway porphyrin-containing compound metabolism; protoporphyrin-IX biosynthesis; 5-aminolevulinate from L-glutamyl-tRNA(Glu): step 2/2. The polypeptide is Glutamate-1-semialdehyde 2,1-aminomutase (Pseudomonas putida (strain ATCC 700007 / DSM 6899 / JCM 31910 / BCRC 17059 / LMG 24140 / F1)).